Consider the following 92-residue polypeptide: DNA-binding protein HU (92 aa).

The protein belongs to the bacterial histone-like protein family. As to quaternary structure, homodimer.

In terms of biological role, histone-like DNA-binding protein which is capable of wrapping DNA to stabilize it, and thus to prevent its denaturation under extreme environmental conditions. In Buchnera aphidicola subsp. Baizongia pistaciae (strain Bp), this protein is DNA-binding protein HU (hup).